The chain runs to 107 residues: MKWIVIDTVIQPTCGISFSAIWGDMKMIIWYQSTIFLPPGRIFTPVKSGIILKDKEYPITIYNIAPFNKDLWSLLKSSQECPPGESKITNKCLHNSCIIKICPYGLK.

Belongs to the IraM/RssC family.

The protein resides in the cytoplasm. Its function is as follows. Inhibits RpoS proteolysis by regulating RssB activity, thereby increasing the stability of the sigma stress factor RpoS during magnesium starvation. The protein is Anti-adapter protein IraM of Escherichia coli O7:K1 (strain IAI39 / ExPEC).